The primary structure comprises 418 residues: Gamma-glutamyl phosphate reductase (418 aa).

Belongs to the gamma-glutamyl phosphate reductase family.

Its subcellular location is the cytoplasm. The catalysed reaction is L-glutamate 5-semialdehyde + phosphate + NADP(+) = L-glutamyl 5-phosphate + NADPH + H(+). Its pathway is amino-acid biosynthesis; L-proline biosynthesis; L-glutamate 5-semialdehyde from L-glutamate: step 2/2. Catalyzes the NADPH-dependent reduction of L-glutamate 5-phosphate into L-glutamate 5-semialdehyde and phosphate. The product spontaneously undergoes cyclization to form 1-pyrroline-5-carboxylate. This is Gamma-glutamyl phosphate reductase from Moorella thermoacetica (strain ATCC 39073 / JCM 9320).